The following is a 257-amino-acid chain: GTP cyclohydrolase FolE2 (257 aa).

It belongs to the GTP cyclohydrolase IV family.

The catalysed reaction is GTP + H2O = 7,8-dihydroneopterin 3'-triphosphate + formate + H(+). It participates in cofactor biosynthesis; 7,8-dihydroneopterin triphosphate biosynthesis; 7,8-dihydroneopterin triphosphate from GTP: step 1/1. Its function is as follows. Converts GTP to 7,8-dihydroneopterin triphosphate. In Kosmotoga olearia (strain ATCC BAA-1733 / DSM 21960 / TBF 19.5.1), this protein is GTP cyclohydrolase FolE2.